A 549-amino-acid polypeptide reads, in one-letter code: Dihydroxy-acid dehydratase (549 aa).

D78 is a binding site for Mg(2+). Residue C119 participates in [2Fe-2S] cluster binding. Mg(2+) contacts are provided by D120 and K121. N6-carboxylysine is present on K121. C191 provides a ligand contact to [2Fe-2S] cluster. Residue E441 coordinates Mg(2+). S466 acts as the Proton acceptor in catalysis.

It belongs to the IlvD/Edd family. As to quaternary structure, homodimer. It depends on [2Fe-2S] cluster as a cofactor. Mg(2+) serves as cofactor.

It carries out the reaction (2R)-2,3-dihydroxy-3-methylbutanoate = 3-methyl-2-oxobutanoate + H2O. The enzyme catalyses (2R,3R)-2,3-dihydroxy-3-methylpentanoate = (S)-3-methyl-2-oxopentanoate + H2O. The protein operates within amino-acid biosynthesis; L-isoleucine biosynthesis; L-isoleucine from 2-oxobutanoate: step 3/4. It participates in amino-acid biosynthesis; L-valine biosynthesis; L-valine from pyruvate: step 3/4. Functions in the biosynthesis of branched-chain amino acids. Catalyzes the dehydration of (2R,3R)-2,3-dihydroxy-3-methylpentanoate (2,3-dihydroxy-3-methylvalerate) into 2-oxo-3-methylpentanoate (2-oxo-3-methylvalerate) and of (2R)-2,3-dihydroxy-3-methylbutanoate (2,3-dihydroxyisovalerate) into 2-oxo-3-methylbutanoate (2-oxoisovalerate), the penultimate precursor to L-isoleucine and L-valine, respectively. This chain is Dihydroxy-acid dehydratase, found in Methanosphaera stadtmanae (strain ATCC 43021 / DSM 3091 / JCM 11832 / MCB-3).